A 186-amino-acid polypeptide reads, in one-letter code: DNA damage up-regulated protein (186 aa).

Residues 147–166 (ATENGEGCRPARDPASSPSS) are disordered.

As to quaternary structure, interacts with DNA damage response proteins ATR, H2AX, PCNA, RAD18 and RAD51C. Forms a complex with H2AX and RAD18 following DDUP phosphorylation. Phosphorylated in an ATR-dependent manner; phosphorylation is required for interaction with H2AX and RAD18 and for DDUP-mediated DNA damage repair.

Its subcellular location is the nucleus. It localises to the chromosome. Its function is as follows. Promotes DNA damage repair through both homologous recombination repair (HRR) and post-replication repair (PRR) mechanisms. Enhances the retention of DNA damage response protein RAD18 at sites of DNA damage. This allows for HRR via association of RAD18 with RAD51C and for PRR via RAD18-mediated promotion of PCNA monoubiquitination. This Homo sapiens (Human) protein is DNA damage up-regulated protein.